The sequence spans 274 residues: Penicillin-insensitive murein endopeptidase (274 aa).

An N-terminal signal peptide occupies residues 1 to 19 (MKNTVIALLALLASAGSLA). 3 disulfides stabilise this stretch: Cys44–Cys265, Cys187–Cys235, and Cys216–Cys223. Positions 110, 113, 120, 147, 150, and 211 each coordinate Zn(2+). The segment at 224–263 (EDQAPPPPGDGCGAELQSWFEPPKPGSTPPVKKTPPPLPP) is disordered. The segment covering 245-263 (PPKPGSTPPVKKTPPPLPP) has biased composition (pro residues).

Belongs to the peptidase M74 family. In terms of assembly, dimer. The cofactor is Zn(2+).

It is found in the periplasm. In terms of biological role, murein endopeptidase that cleaves the D-alanyl-meso-2,6-diamino-pimelyl amide bond that connects peptidoglycan strands. Likely plays a role in the removal of murein from the sacculus. This Klebsiella pneumoniae subsp. pneumoniae (strain ATCC 700721 / MGH 78578) protein is Penicillin-insensitive murein endopeptidase.